The sequence spans 310 residues: Vomeronasal type-1 receptor 93 (310 aa).

Residues 1 to 20 are Extracellular-facing; that stretch reads MNKDNTLHVDTIMKITMFSE. The chain crosses the membrane as a helical span at residues 21–41; the sequence is VSVGILANSILFFAHLCMLLG. The Cytoplasmic portion of the chain corresponds to 42–59; sequence ENKPKPIHLYIASLSLTQ. A helical transmembrane segment spans residues 60-80; that stretch reads LMLLITMGLIAADMFISQGIW. Topologically, residues 81–93 are extracellular; the sequence is DSTSCQSLIYLHR. A disulfide bridge connects residues cysteine 85 and cysteine 172. A helical membrane pass occupies residues 94 to 114; sequence LSRGFTLSAACLLNVFWMITL. The Cytoplasmic segment spans residues 115 to 134; it reads SSKKSRLTKFKHNSPHHISG. Residues 135 to 155 traverse the membrane as a helical segment; the sequence is AFLLLCVLYMCFSSHLILSII. Residues 156–193 lie on the Extracellular side of the membrane; sequence ATPNLTSDNFMYVTKSCSFLPMCYSRTSMFSTTIAVRE. Asparagine 159 carries N-linked (GlcNAc...) asparagine glycosylation. Residues 194–214 traverse the membrane as a helical segment; the sequence is AFFIGLMALSSGYLVAFLWRH. Topologically, residues 215–238 are cytoplasmic; sequence RKQAQHLHSTGLSSKASPEQRATE. Residues 239 to 259 traverse the membrane as a helical segment; the sequence is TILLLMSFFVVLYILENVVFY. The Extracellular portion of the chain corresponds to 260–269; sequence SRMKFKDGST. A helical membrane pass occupies residues 270-290; the sequence is FYCVQIIVSHSYATVSSFVFI. The Cytoplasmic portion of the chain corresponds to 291–310; it reads FTEKRMTKILRSVCTRIINI.

This sequence belongs to the G-protein coupled receptor 1 family. In terms of tissue distribution, expressed in 1-4% of neurons of the vomeronasal organ. Only one pheromone receptor gene may be expressed in a particular neuron. Not expressed in the main olfactory epithelium.

The protein resides in the cell membrane. In terms of biological role, putative pheromone receptor implicated in the regulation of social as well as reproductive behavior. The polypeptide is Vomeronasal type-1 receptor 93 (Vom1r93) (Rattus norvegicus (Rat)).